Consider the following 436-residue polypeptide: UDP-N-acetylmuramate--L-alanine ligase (436 aa).

108–114 provides a ligand contact to ATP; that stretch reads GAHGKTS.

This sequence belongs to the MurCDEF family.

The protein resides in the cytoplasm. The enzyme catalyses UDP-N-acetyl-alpha-D-muramate + L-alanine + ATP = UDP-N-acetyl-alpha-D-muramoyl-L-alanine + ADP + phosphate + H(+). It participates in cell wall biogenesis; peptidoglycan biosynthesis. In terms of biological role, cell wall formation. The polypeptide is UDP-N-acetylmuramate--L-alanine ligase (Bacillus cereus (strain B4264)).